Consider the following 359-residue polypeptide: Heat-inducible transcription repressor HrcA (359 aa).

It belongs to the HrcA family.

Its function is as follows. Negative regulator of class I heat shock genes (grpE-dnaK-dnaJ and groELS operons). Prevents heat-shock induction of these operons. This Sinorhizobium fredii (strain NBRC 101917 / NGR234) protein is Heat-inducible transcription repressor HrcA.